The primary structure comprises 132 residues: Methylglyoxal synthase (132 aa).

An MGS-like domain is found at 1 to 132 (MNIALIAHDQ…LLEWREIEDK (132 aa)). Substrate-binding residues include His8 and Lys12. The active-site Proton donor/acceptor is the Asp60. His87 contributes to the substrate binding site.

This sequence belongs to the methylglyoxal synthase family.

The catalysed reaction is dihydroxyacetone phosphate = methylglyoxal + phosphate. Its function is as follows. Catalyzes the formation of methylglyoxal from dihydroxyacetone phosphate. The chain is Methylglyoxal synthase from Thermoanaerobacter pseudethanolicus (strain ATCC 33223 / 39E) (Clostridium thermohydrosulfuricum).